We begin with the raw amino-acid sequence, 721 residues long: Polyribonucleotide nucleotidyltransferase (721 aa).

Mg(2+)-binding residues include Asp495 and Asp501. A KH domain is found at 562-621; that stretch reads PRLLSFRIDPELIGTVIGPGGRTIKGITERTNTKIDIEDGGIVTIASHDGAAAEEAQKII. The region spanning 631 to 699 is the S1 motif domain; the sequence is GEIFPGVVTR…SRGRINLTLR (69 aa).

This sequence belongs to the polyribonucleotide nucleotidyltransferase family. Requires Mg(2+) as cofactor.

It localises to the cytoplasm. It catalyses the reaction RNA(n+1) + phosphate = RNA(n) + a ribonucleoside 5'-diphosphate. Involved in mRNA degradation. Catalyzes the phosphorolysis of single-stranded polyribonucleotides processively in the 3'- to 5'-direction. The polypeptide is Polyribonucleotide nucleotidyltransferase (Prochlorococcus marinus subsp. pastoris (strain CCMP1986 / NIES-2087 / MED4)).